The chain runs to 1344 residues: MFLMPTSSELNSGQNFLTQWMTSPSRAGVILNRGFPILEADDKQAATNVSTSFPAKATHFSNSFSISSEEDSFHEEQKLEAGGPYKPWSENPEAPPVFPSVRKEPIASRQDAPGCQEDNNNDLTPHLESEFKEVANKNPLFKKLEQLKEIQQKKQEQLKRQQLEQLQRLMEEQEKLLTMVSAQHAFPGTLLPDDQSQKHRSPGDLTLPPHSYSNPTQENSCASNVLPDEQSNFCRATQDSVLTSKNASDLFYESQYQEAHVKRNDLKEESPAHPSGEGALPRWEKKMGRSQEGKDVNLQKCGDSSEVVNIDERPIKAAVREKQQTFEDYLEEQIQLEERELRQKQLQEAEGPLLAKTKPKQPFLKRGEGLARFTNAKSKFQKGKESKLASTQSPSEDQPGSKVDRQHLQRKTALINKDLCAETPTVKKDSKARPKAGFASLRQKPKVTKTNMRESLSPPGLKVQTGKKRDGQFRHQVKGERNAHASNKENVPACIKPWDAGCKMWSKTQGRERLPLSTGPVGCVVSRSPIRETDRETESSLDFSLQKKLEIWEREKEKENLELDEFLFLERAADEISFSSNSSFVLRILERDQQICDGHRLSSTPVKAVQQREAQQADPRGQSNCSEIPRYGVAHENESECEAMLLSWGSGSPDGLRELSCKRSMKAFQTSTSEIQSQWDARDDGVANSDSSTESEEQHDITIKPSTEVGDRVFSNREDSPQVCDAKGPIRDTGAQEDKWRDADLDLSDKECSSDESVIVESLNNKVLEPLRLPSSQAGSKIDFDDERSWTDLEENPYEHGVIHREEAIYGTPQTQCHSKSEGCVLDKTIKRKIAPVKKGEDFKCDRRISPPPPSDLMVKFFPSLKPKPKLDSHLENESKLNLSQDQPPEFMVCFIGDSVRSQVLREKVTELESEIEKFKAENTSLAKLRIERESALEKLRKEIADFEQQKARELARIEEYRKEETRKLQKERKVFEKYTAAARTFPDKKEREEIQALKQQIADLQEDLKRKETKWSSTQSRLRSQIEMLVKENTDLREEIKVMERFRLDAWKRAEAMENSPKACQYMMATKKDESMNSSFQFQKSHVSSGVQVEKYKKKYLPAQGNLSRRIKSAPPRDLGSSDKGQAALPREPLQQVNFPDLEYKNKEEKEEEIQGEISHPDGKVEKIYKNGRRVVLFPNGTRKEVSADGKSVTVTFFNGDVKQVMPDERVVYYYAAAQTTHTTYPEGLEVLHFSSGQIEKHFPDGRKEITFPDQTIKTLFADGQEESIFPDGTIVRVQRDGNKIIEFNNGQRELHTAQFKRREYPDGTVKTVYANGHQETKYTSGRVRVKDKDGNVLMDTEM.

Disordered stretches follow at residues 67-123 and 187-225; these read SSEE…NNDL and PGTL…ASNV. Residues 211–225 are compositionally biased toward polar residues; the sequence is SYSNPTQENSCASNV. Position 248 is a phosphoserine (S248). The segment at 257–300 is disordered; that stretch reads QEAHVKRNDLKEESPAHPSGEGALPRWEKKMGRSQEGKDVNLQK. 2 stretches are compositionally biased toward basic and acidic residues: residues 259–271 and 282–297; these read AHVK…EESP and RWEK…KDVN. Phosphoserine is present on S304. The interval 307–382 is alpha/beta-tubulin binding; the sequence is VVNIDERPIK…FTNAKSKFQK (76 aa). Disordered stretches follow at residues 347–407 and 425–470; these read QEAE…DRQH and TVKK…KKRD. Residues 388–398 are compositionally biased toward polar residues; that stretch reads LASTQSPSEDQ. S528 is subject to Phosphoserine. Residues S577 and S583 each carry the phosphoserine; by PLK2 modification. Disordered regions lie at residues 600–626 and 672–735; these read RLSS…SNCS and TSEI…DTGA. The span at 709-720 shows a compositional bias: basic and acidic residues; the sequence is VGDRVFSNREDS. S748 carries the phosphoserine modification. Residues 887–1344 are interaction with STIL; sequence QPPEFMVCFI…DGNVLMDTEM (458 aa). Positions 1105 to 1133 are disordered; the sequence is QGNLSRRIKSAPPRDLGSSDKGQAALPRE.

It belongs to the TCP10 family. As to quaternary structure, forms homodimers. Associates with microtubules plus ends; binds to beta-tubulin subunits exposed on microtubule outer surface at its distal tip; also associates with microtubule lattice. Associated with the gamma-tubulin complex. Interacts with the head domain of EPB41. Interacts with LYST. Interacts with CEP152 (via C-terminus). Interacts with STIL. Forms a complex with STIL and SASS6. Phosphorylation at Ser-577 and Ser-583 by PLK2 is required for procentriole formation and centriole elongation. Phosphorylation by PLK2 oscillates during the cell cycle: it increases at G1/S transition and decreases during the exit from mitosis. Phosphorylation at Ser-583 is also mediated by PLK4 but is not a critical step in PLK4 function in procentriole assembly.

It is found in the cytoplasm. It localises to the cytoskeleton. The protein resides in the microtubule organizing center. Its subcellular location is the centrosome. The protein localises to the centriole. Its function is as follows. Plays an important role in cell division and centrosome function by participating in centriole duplication. Inhibits microtubule nucleation from the centrosome. Involved in the regulation of slow processive growth of centriolar microtubules. Acts as microtubule plus-end tracking protein that stabilizes centriolar microtubules and inhibits microtubule polymerization and extension from the distal ends of centrioles. Required for centriole elongation and for STIL-mediated centriole amplification. Required for the recruitment of CEP295 to the proximal end of new-born centrioles at the centriolar microtubule wall during early S phase in a PLK4-dependent manner. May be involved in the control of centriolar-microtubule growth by acting as a regulator of tubulin release. The sequence is that of Centrosomal P4.1-associated protein (Cpap) from Mus musculus (Mouse).